Consider the following 259-residue polypeptide: UPF0246 protein PLES_14941 (259 aa).

This sequence belongs to the UPF0246 family.

This chain is UPF0246 protein PLES_14941, found in Pseudomonas aeruginosa (strain LESB58).